A 513-amino-acid chain; its full sequence is MAQVFPDVIEEKIQDDDKFFGQTRLKNDDIDFNDPDNVLTMKNIHKTYLLGIEGVPALRGVSMAIKRGEFICIFGTSGGGKTTMLNIIGTIDKPTKGEMKLCGKTINHKTTDKDLAFLRLRNIGFVFQTFNLLSSLTALENVEMPMILLGELSASERRERAISLLTKVGMKDRLDHFPSQLSGGEQQRVTIARAIANNPDVLLLDEPTGDLDTVNTSVIMKLLTDLNKQENITLIMVTHDVGLKMYSDRIIWMRDGKIQRIETVQEQSKREHYQKLYKECELINQNQKNGVTSVFKNDDDNKNIKKQGTLTEFRRPTDYKSIASYNNNNSNLNNNSNSNSNNNSNNNNSKNYASSSSSSSVLNGKLSQSTVNNSSIYNHNNDSPFFNSNNNNNINNNINNNNNNNNNNNNNNNNNNNNNNNNNNNNNNSNSNNNNSNSNNNNNNTKSNNNNNNNIFDIASSSSSYSNNNNNSKNNSLIDDIYLDINEGSSSNFSNNDNFKSVDQITNDLSRIL.

An ABC transporter domain is found at 39–280; it reads LTMKNIHKTY…EHYQKLYKEC (242 aa). 75-82 lines the ATP pocket; sequence GTSGGGKT. Positions 291–471 are disordered; the sequence is VTSVFKNDDD…SSSYSNNNNN (181 aa). A compositionally biased stretch (low complexity) spans 324–360; the sequence is SYNNNNSNLNNNSNSNSNNNSNNNNSKNYASSSSSSS. Over residues 361 to 386 the composition is skewed to polar residues; that stretch reads VLNGKLSQSTVNNSSIYNHNNDSPFF. Over residues 387–471 the composition is skewed to low complexity; the sequence is NSNNNNNINN…SSSYSNNNNN (85 aa).

It belongs to the ABC transporter superfamily.

In Dictyostelium discoideum (Social amoeba), this protein is ABC transporter H family member 2 (abcH2).